Consider the following 176-residue polypeptide: Large ribosomal subunit protein uL10 (176 aa).

It belongs to the universal ribosomal protein uL10 family. In terms of assembly, part of the ribosomal stalk of the 50S ribosomal subunit. The N-terminus interacts with L11 and the large rRNA to form the base of the stalk. The C-terminus forms an elongated spine to which L12 dimers bind in a sequential fashion forming a multimeric L10(L12)X complex.

In terms of biological role, forms part of the ribosomal stalk, playing a central role in the interaction of the ribosome with GTP-bound translation factors. The protein is Large ribosomal subunit protein uL10 (rplJ) of Streptomyces coelicolor (strain ATCC BAA-471 / A3(2) / M145).